The chain runs to 467 residues: F-box only protein 6 (467 aa).

The 50-residue stretch at 114-163 (QEIWQEFPQDLFEDVVSRLPMATFFQFRAVCRKWNALIDSDSFSRCFTEL) folds into the F-box domain. Kelch repeat units follow at residues 163 to 211 (LPQT…MASA), 252 to 305 (GMTL…NFKS), and 406 to 456 (CLGN…IACG).

The sequence is that of F-box only protein 6 (FBX6) from Arabidopsis thaliana (Mouse-ear cress).